The primary structure comprises 245 residues: Orotidine 5'-phosphate decarboxylase (245 aa).

Substrate contacts are provided by residues Asp-22, Lys-44, 71 to 80 (DLKFHDIPNT), Thr-131, Arg-192, Gln-201, Gly-221, and Arg-222. Lys-73 functions as the Proton donor in the catalytic mechanism.

It belongs to the OMP decarboxylase family. Type 1 subfamily. As to quaternary structure, homodimer.

The enzyme catalyses orotidine 5'-phosphate + H(+) = UMP + CO2. Its pathway is pyrimidine metabolism; UMP biosynthesis via de novo pathway; UMP from orotate: step 2/2. In terms of biological role, catalyzes the decarboxylation of orotidine 5'-monophosphate (OMP) to uridine 5'-monophosphate (UMP). This chain is Orotidine 5'-phosphate decarboxylase, found in Escherichia coli O157:H7.